The sequence spans 184 residues: Photosystem I assembly protein Ycf4 (184 aa).

Transmembrane regions (helical) follow at residues 22–42 (FGWACILFLGSLGFLVVGASS) and 57–77 (IVFFPQGIVMSFYGIAGLFIS).

It belongs to the Ycf4 family.

It is found in the plastid. The protein localises to the chloroplast thylakoid membrane. Seems to be required for the assembly of the photosystem I complex. The polypeptide is Photosystem I assembly protein Ycf4 (Acorus calamus (Sweet flag)).